Reading from the N-terminus, the 343-residue chain is N-acetyl-gamma-glutamyl-phosphate reductase (343 aa).

Residue Cys-147 is part of the active site.

Belongs to the NAGSA dehydrogenase family. Type 1 subfamily.

The protein localises to the cytoplasm. The enzyme catalyses N-acetyl-L-glutamate 5-semialdehyde + phosphate + NADP(+) = N-acetyl-L-glutamyl 5-phosphate + NADPH + H(+). Its pathway is amino-acid biosynthesis; L-arginine biosynthesis; N(2)-acetyl-L-ornithine from L-glutamate: step 3/4. Functionally, catalyzes the NADPH-dependent reduction of N-acetyl-5-glutamyl phosphate to yield N-acetyl-L-glutamate 5-semialdehyde. The sequence is that of N-acetyl-gamma-glutamyl-phosphate reductase from Staphylococcus saprophyticus subsp. saprophyticus (strain ATCC 15305 / DSM 20229 / NCIMB 8711 / NCTC 7292 / S-41).